We begin with the raw amino-acid sequence, 306 residues long: Elongation factor Ts (306 aa).

Residues 80–83 are involved in Mg(2+) ion dislocation from EF-Tu; it reads TDFV.

This sequence belongs to the EF-Ts family.

Its subcellular location is the cytoplasm. Associates with the EF-Tu.GDP complex and induces the exchange of GDP to GTP. It remains bound to the aminoacyl-tRNA.EF-Tu.GTP complex up to the GTP hydrolysis stage on the ribosome. This chain is Elongation factor Ts, found in Clostridium kluyveri (strain NBRC 12016).